We begin with the raw amino-acid sequence, 341 residues long: HTH-type transcriptional repressor PurR (341 aa).

In terms of domain architecture, HTH lacI-type spans A2–V56. The segment at residues I4 to N23 is a DNA-binding region (H-T-H motif). A DNA-binding region spans residues S48–V56. The hypoxanthine site is built by Y73, R190, T192, F221, and D275.

Homodimer.

It functions in the pathway purine metabolism; purine nucleotide biosynthesis [regulation]. Its function is as follows. Is the main repressor of the genes involved in the de novo synthesis of purine nucleotides, regulating purB, purC, purEK, purF, purHD, purL, purMN and guaBA expression. PurR is allosterically activated to bind its cognate DNA by binding the purine corepressors, hypoxanthine or guanine, thereby effecting transcription repression. The protein is HTH-type transcriptional repressor PurR of Yersinia pseudotuberculosis serotype O:1b (strain IP 31758).